A 507-amino-acid polypeptide reads, in one-letter code: Steroid (22S)-hydroxylase (507 aa).

A helical membrane pass occupies residues 12 to 32; that stretch reads LLFFLPYILLALLTFYTTTVA. Cys-444 serves as a coordination point for heme.

Belongs to the cytochrome P450 family. It depends on heme as a cofactor.

It is found in the membrane. It carries out the reaction a C27-steroid + reduced [NADPH--hemoprotein reductase] + O2 = a (22S)-22-hydroxy C27-steroid + oxidized [NADPH--hemoprotein reductase] + H2O + H(+). The enzyme catalyses a C28-steroid + reduced [NADPH--hemoprotein reductase] + O2 = a (22S)-22-hydroxy C28-steroid + oxidized [NADPH--hemoprotein reductase] + H2O + H(+). The catalysed reaction is campesterol + reduced [NADPH--hemoprotein reductase] + O2 = (22S)-22-hydroxycampesterol + oxidized [NADPH--hemoprotein reductase] + H2O + H(+). It catalyses the reaction campestanol + reduced [NADPH--hemoprotein reductase] + O2 = 6-deoxycathasterone + oxidized [NADPH--hemoprotein reductase] + H2O + H(+). It functions in the pathway plant hormone biosynthesis; brassinosteroid biosynthesis. Its function is as follows. Involved in reduction steps of the biosynthesis of plant campesterol-derivative steroids, ending to castasterone (CS) but missing brassinolide (BL). Catalyzes the conversion of campesterol (CR) to (22S)-22-hydroxycampesterol (22-OHCR, 22-hydroxyCR) and of campestanol (CN) to 6-deoxycathasterone (6-deoxoCT). This Brachypodium distachyon (Purple false brome) protein is Steroid (22S)-hydroxylase.